Reading from the N-terminus, the 264-residue chain is Putative hydro-lyase Bpet2233 (264 aa).

Belongs to the D-glutamate cyclase family.

In Bordetella petrii (strain ATCC BAA-461 / DSM 12804 / CCUG 43448), this protein is Putative hydro-lyase Bpet2233.